Reading from the N-terminus, the 122-residue chain is Large ribosomal subunit protein uL14 (122 aa).

The protein belongs to the universal ribosomal protein uL14 family. In terms of assembly, part of the 50S ribosomal subunit. Forms a cluster with proteins L3 and L19. In the 70S ribosome, L14 and L19 interact and together make contacts with the 16S rRNA in bridges B5 and B8.

Its function is as follows. Binds to 23S rRNA. Forms part of two intersubunit bridges in the 70S ribosome. The chain is Large ribosomal subunit protein uL14 from Elusimicrobium minutum (strain Pei191).